A 212-amino-acid polypeptide reads, in one-letter code: LexA repressor (212 aa).

Residues 29 to 49 constitute a DNA-binding region (H-T-H motif); it reads VREIGEAVGLSSSSTIHGHIE. Residues Ser133 and Lys171 each act as for autocatalytic cleavage activity in the active site.

It belongs to the peptidase S24 family. As to quaternary structure, homodimer.

The catalysed reaction is Hydrolysis of Ala-|-Gly bond in repressor LexA.. Functionally, represses a number of genes involved in the response to DNA damage (SOS response), including recA and lexA. In the presence of single-stranded DNA, RecA interacts with LexA causing an autocatalytic cleavage which disrupts the DNA-binding part of LexA, leading to derepression of the SOS regulon and eventually DNA repair. In Leuconostoc mesenteroides subsp. mesenteroides (strain ATCC 8293 / DSM 20343 / BCRC 11652 / CCM 1803 / JCM 6124 / NCDO 523 / NBRC 100496 / NCIMB 8023 / NCTC 12954 / NRRL B-1118 / 37Y), this protein is LexA repressor.